Consider the following 277-residue polypeptide: MMDLWTAAQALILGVVEGLTEFLPISSTGHQIIVADLIDFGGERAMAFNIIIQLGAILAVVWEFRRKILDVVTGLPKQQQAQRFTLNLLIAFMPAVVLGVIFADTIHHYLFNAITVATALVVGGVIMLWAERREHTVRTETVDDMTWSDALKVGLVQCLAMIPGTSRSGSTIIGGLLFGLSRKAATEFSFFLAMPTMVGAAVYSGYKYRDMFRPDDFAVFAIGFITSFIFAMIAVRALLKFIATHSYAVFAWYRIAFGLLILATWQFGWIDWASAKA.

The next 7 membrane-spanning stretches (helical) occupy residues 5-25 (WTAA…FLPI), 44-64 (RAMA…VWEF), 86-106 (LNLL…ADTI), 110-130 (LFNA…MLWA), 184-204 (AATE…AVYS), 219-239 (VFAI…RALL), and 255-275 (IAFG…WASA).

The protein belongs to the UppP family.

It is found in the cell inner membrane. The enzyme catalyses di-trans,octa-cis-undecaprenyl diphosphate + H2O = di-trans,octa-cis-undecaprenyl phosphate + phosphate + H(+). Its function is as follows. Catalyzes the dephosphorylation of undecaprenyl diphosphate (UPP). Confers resistance to bacitracin. The polypeptide is Undecaprenyl-diphosphatase (Pseudomonas savastanoi pv. phaseolicola (strain 1448A / Race 6) (Pseudomonas syringae pv. phaseolicola (strain 1448A / Race 6))).